Consider the following 809-residue polypeptide: PiggyBac transposable element-derived protein 1 (809 aa).

One can recognise an SCAN box domain in the interval 44 to 126; that stretch reads RLRFRHFCYQ…TVLENLETGS (83 aa). Positions 170-199 are disordered; that stretch reads CEPPQRPQGNPQEVSGPVPHGSAHLQEKNP. Residue lysine 218 forms a Glycyl lysine isopeptide (Lys-Gly) (interchain with G-Cter in SUMO2) linkage. The segment at 271 to 297 is disordered; the sequence is KQETSEEMEQSGEASGKPNRECAPQIP. Serine 360 is subject to Phosphoserine.

In Homo sapiens (Human), this protein is PiggyBac transposable element-derived protein 1 (PGBD1).